The primary structure comprises 660 residues: Bifunctional polymyxin resistance protein ArnA (660 aa).

Residues 1–304 (MKTVVFAYHD…MLGLVQGSRL (304 aa)) form a formyltransferase ArnAFT region. (6R)-10-formyltetrahydrofolate is bound at residue 86–88 (HLI). Residue His-104 is the Proton donor; for formyltransferase activity of the active site. (6R)-10-formyltetrahydrofolate contacts are provided by residues Arg-114 and 136–140 (VKRAD). The segment at 314–660 (RRTRVLILGV…RTVDLTDKPS (347 aa)) is dehydrogenase ArnADH. NAD(+) is bound by residues Asp-347 and 368 to 369 (DI). Residues Ala-393, Tyr-398, and 432–433 (TS) each bind UDP-alpha-D-glucuronate. The active-site Proton acceptor; for decarboxylase activity is Glu-434. Residues Arg-460, Asn-492, 526–535 (KLIDGGKQKR), and Tyr-613 each bind UDP-alpha-D-glucuronate. Residue Arg-619 is the Proton donor; for decarboxylase activity of the active site.

In the N-terminal section; belongs to the Fmt family. UDP-L-Ara4N formyltransferase subfamily. It in the C-terminal section; belongs to the NAD(P)-dependent epimerase/dehydratase family. UDP-glucuronic acid decarboxylase subfamily. As to quaternary structure, homohexamer, formed by a dimer of trimers.

It catalyses the reaction UDP-alpha-D-glucuronate + NAD(+) = UDP-beta-L-threo-pentopyranos-4-ulose + CO2 + NADH. The catalysed reaction is UDP-4-amino-4-deoxy-beta-L-arabinose + (6R)-10-formyltetrahydrofolate = UDP-4-deoxy-4-formamido-beta-L-arabinose + (6S)-5,6,7,8-tetrahydrofolate + H(+). Its pathway is nucleotide-sugar biosynthesis; UDP-4-deoxy-4-formamido-beta-L-arabinose biosynthesis; UDP-4-deoxy-4-formamido-beta-L-arabinose from UDP-alpha-D-glucuronate: step 1/3. It participates in nucleotide-sugar biosynthesis; UDP-4-deoxy-4-formamido-beta-L-arabinose biosynthesis; UDP-4-deoxy-4-formamido-beta-L-arabinose from UDP-alpha-D-glucuronate: step 3/3. The protein operates within bacterial outer membrane biogenesis; lipopolysaccharide biosynthesis. In terms of biological role, bifunctional enzyme that catalyzes the oxidative decarboxylation of UDP-glucuronic acid (UDP-GlcUA) to UDP-4-keto-arabinose (UDP-Ara4O) and the addition of a formyl group to UDP-4-amino-4-deoxy-L-arabinose (UDP-L-Ara4N) to form UDP-L-4-formamido-arabinose (UDP-L-Ara4FN). The modified arabinose is attached to lipid A and is required for resistance to polymyxin and cationic antimicrobial peptides. In Shigella sonnei (strain Ss046), this protein is Bifunctional polymyxin resistance protein ArnA.